The sequence spans 70 residues: Small ribosomal subunit protein bS21 (70 aa).

This sequence belongs to the bacterial ribosomal protein bS21 family.

The sequence is that of Small ribosomal subunit protein bS21 from Chromobacterium violaceum (strain ATCC 12472 / DSM 30191 / JCM 1249 / CCUG 213 / NBRC 12614 / NCIMB 9131 / NCTC 9757 / MK).